The sequence spans 359 residues: 4-hydroxy-3-methylbut-2-en-1-yl diphosphate synthase (flavodoxin) (359 aa).

[4Fe-4S] cluster-binding residues include C264, C267, C299, and E306.

It belongs to the IspG family. [4Fe-4S] cluster serves as cofactor.

It carries out the reaction (2E)-4-hydroxy-3-methylbut-2-enyl diphosphate + oxidized [flavodoxin] + H2O + 2 H(+) = 2-C-methyl-D-erythritol 2,4-cyclic diphosphate + reduced [flavodoxin]. The protein operates within isoprenoid biosynthesis; isopentenyl diphosphate biosynthesis via DXP pathway; isopentenyl diphosphate from 1-deoxy-D-xylulose 5-phosphate: step 5/6. In terms of biological role, converts 2C-methyl-D-erythritol 2,4-cyclodiphosphate (ME-2,4cPP) into 1-hydroxy-2-methyl-2-(E)-butenyl 4-diphosphate. The polypeptide is 4-hydroxy-3-methylbut-2-en-1-yl diphosphate synthase (flavodoxin) (Mycoplasmoides gallisepticum (strain R(low / passage 15 / clone 2)) (Mycoplasma gallisepticum)).